Reading from the N-terminus, the 391-residue chain is Extracellular metalloproteinase 3 (391 aa).

Positions 1–9 are excised as a propeptide; sequence HNVVDYVAS. Residue asparagine 173 is glycosylated (N-linked (GlcNAc...) asparagine). Histidine 192 provides a ligand contact to Zn(2+). Glutamate 193 is an active-site residue. Zn(2+) is bound at residue histidine 196. N-linked (GlcNAc...) asparagine glycosylation is found at asparagine 243 and asparagine 385.

It belongs to the peptidase M36 family. Zn(2+) is required as a cofactor.

The protein localises to the secreted. Secreted metalloproteinase probably acting as a virulence factor. This chain is Extracellular metalloproteinase 3 (MEP3), found in Trichophyton soudanense.